The chain runs to 744 residues: Serine/threonine-protein kinase GM11705 (744 aa).

Polar residues predominate over residues 17–35 (VLSSHQPSPSATHPQSVPS). Disordered regions lie at residues 17 to 38 (VLSS…SKAN) and 54 to 78 (NVQE…PEKE). 2 Doublecortin domains span residues 154-240 (LRIK…VEYN) and 309-392 (RIVT…AEDF). Residues 473 to 731 (YTLGRIIGDG…SEDILDHPWT (259 aa)) form the Protein kinase domain. ATP-binding positions include 479–487 (IGDGNFAIV) and lysine 502. The Proton acceptor role is filled by aspartate 594.

The protein belongs to the protein kinase superfamily. CAMK Ser/Thr protein kinase family. CaMK subfamily.

It catalyses the reaction L-seryl-[protein] + ATP = O-phospho-L-seryl-[protein] + ADP + H(+). The catalysed reaction is L-threonyl-[protein] + ATP = O-phospho-L-threonyl-[protein] + ADP + H(+). The chain is Serine/threonine-protein kinase GM11705 from Drosophila sechellia (Fruit fly).